Consider the following 226-residue polypeptide: Late protein I226R (226 aa).

The signal sequence occupies residues 1–16 (MKMETFLVCLFHNAKG). An N-linked (GlcNAc...) asparagine; by host glycan is attached at N164.

The protein belongs to the asfivirus I226R family.

Its function is as follows. Plays a role in the inhibition of host NF-kappa-B and IRF3 signaling pathways. Mechanistically, promotes the degradation of host IKBKG through enhancing its ubiquitination leading to inhibition of both pathways. This Ornithodoros (relapsing fever ticks) protein is Late protein I226R.